The sequence spans 327 residues: Movement protein (327 aa).

A coiled-coil region spans residues 297-327 (SASSSNTENELARVSQNIDLLKNKLKEICGE).

This sequence belongs to the caulimoviridae movement protein family. As to quaternary structure, homotrimer, through the coiled-coil domain. Interacts with VAP. May interact (via N-terminus) with host prenylated Rab acceptor protein 1D (PRA1D).

The protein resides in the host cell junction. The protein localises to the host plasmodesma. In terms of biological role, transports viral genome to neighboring plant cells directly through plasmosdesmata, without any budding. The movement protein allows efficient cell to cell propagation, by bypassing the host cell wall barrier. Acts by forming tubules structures that increase the size exclusion limit (SEL) of plasmodesmata, thereby allowing viral ribonucleocapsids to spread directly to neighboring cells. The protein is Movement protein of Cauliflower mosaic virus (strain W260) (CaMV).